Consider the following 347-residue polypeptide: Heat-inducible transcription repressor HrcA (347 aa).

It belongs to the HrcA family.

In terms of biological role, negative regulator of class I heat shock genes (grpE-dnaK-dnaJ and groELS operons). Prevents heat-shock induction of these operons. This Lactococcus lactis subsp. cremoris (strain MG1363) protein is Heat-inducible transcription repressor HrcA.